The sequence spans 271 residues: Zinc finger protein 501 (271 aa).

C2H2-type zinc fingers lie at residues 22 to 44 (SKCS…QRIH), 50 to 72 (YVCS…LRIH), 78 to 100 (YKCN…LRIH), 106 to 128 (YKCN…QRIH), 134 to 156 (YKCT…QRSH), 162 to 184 (FKCN…QRIH), 190 to 212 (YTCT…ERTH), 218 to 240 (YKCS…YRIH), and 246 to 268 (YECV…QRLH).

This sequence belongs to the krueppel C2H2-type zinc-finger protein family.

Its subcellular location is the nucleus. It is found in the nucleolus. Its function is as follows. May be involved in transcriptional regulation. Essential for Golgi structural integrity. The chain is Zinc finger protein 501 (ZNF501) from Homo sapiens (Human).